Consider the following 372-residue polypeptide: CXADR-like membrane protein (372 aa).

The signal sequence occupies residues 1-17 (MSLFFLWLVTYYVGTLG). Ig-like C2-type domains lie at 18 to 126 (THTE…VILK) and 134 to 223 (PKCE…VRVT). The Extracellular portion of the chain corresponds to 18–234 (THTEIKRVAE…QYVQSIGMVA (217 aa)). 2 cysteine pairs are disulfide-bonded: Cys-34-Cys-110 and Cys-152-Cys-207. 2 N-linked (GlcNAc...) asparagine glycosylation sites follow: Asn-73 and Asn-196. Residues 235–255 (GAVTGIVAGALLIFLLIWLLI) form a helical membrane-spanning segment. At 256 to 372 (RRKSKERYEE…PSQSRAFQTV (117 aa)) the chain is on the cytoplasmic side. A compositionally biased stretch (basic and acidic residues) spans 263–280 (YEEEDRPNEIREDAEAPR). The segment at 263 to 372 (YEEEDRPNEI…PSQSRAFQTV (110 aa)) is disordered. 2 stretches are compositionally biased toward low complexity: residues 287 to 313 (SSSS…ASRS) and 352 to 361 (LTKAETTLST). Positions 362–372 (MPSQSRAFQTV) are enriched in polar residues.

In terms of tissue distribution, predominantly expressed in the white adipose tissue.

It is found in the cell junction. The protein resides in the tight junction. The protein localises to the cell membrane. In terms of biological role, may be involved in the cell-cell adhesion. May play a role in adipocyte differentiation and development of obesity. Is required for normal small intestine development. The protein is CXADR-like membrane protein (Clmp) of Rattus norvegicus (Rat).